A 343-amino-acid chain; its full sequence is Allergin-1 (343 aa).

Residues 1–19 form the signal peptide; it reads MWSHLNRLLFWSIFSSVTC. Residues 20 to 227 are Extracellular-facing; it reads RKAVLDCEAM…GGDSCPFCLK (208 aa). 2 consecutive Ig-like C2-type domains span residues 35–118 and 128–213; these read PSPC…RDFS and PVLN…HPVT. N-linked (GlcNAc...) asparagine glycans are attached at residues asparagine 51, asparagine 60, asparagine 89, asparagine 151, asparagine 157, and asparagine 182. Disulfide bonds link cysteine 56-cysteine 103 and cysteine 147-cysteine 196. The helical transmembrane segment at 228–248 threads the bilayer; it reads LLLPGLLLLLVVIILILAFWV. Topologically, residues 249–343 are cytoplasmic; it reads LPKYKTRKAM…SGYVYSELNF (95 aa). 2 short sequence motifs (ITIM motif) span residues 311–316 and 336–341; these read LQYATP and YVYSEL. Residues tyrosine 313 and tyrosine 338 each carry the phosphotyrosine modification.

Monomer. Interacts (tyrosine-phosphorylated) with PTPN6, PTPN11 and INPP5D. Post-translationally, N-glycosylated. As to expression, expressed in myeloid cells (dendritic cells, macrophages and neutrophils, weak expression on B-cells but not in T-cells or natural killer cells), peripheral blood basophils and mast cells (at protein level).

It localises to the cell membrane. Functionally, immunoglobulin-like receptor which plays an inhibitory role in degranulation of mast cells. Negatively regulates IgE-mediated mast cell activation and suppresses the type I immediate hypersensitivity reaction. This is Allergin-1 (MILR1) from Homo sapiens (Human).